The chain runs to 400 residues: MKRNIQIEALNQIPLEKQRIELVERKCLGHPDSIADGIAESISQALCREYLKEFGAVLHHNTDQGEVVAGESCPKFGGGKMIRPIYVLIDGRATKQFNGVTIPTDTVAVEAAHEYLHKILPELNLQRDVMIDSRLGTGSTDLRDVFKPRQGKVPRSNDTSFGVGHAPFSDVETIIRNTSEYIDTKLRKKYPAIGQDIKIMGLRDGNTITLTVACAIVDRYCADIREYQEYMGLLTEEIGKVAKKSTKRKVVVNLNTADDIKSKSVFLTVTGTSAEMGDDGSVGRGNRCNGLITPNRPMSMEATSGKNPINHIGKIYNLLSTQIAQESIKKVDGIEEMYVRLLSQIGKPIDQPLVASVQVLPRKGVTLQEINGEIQAIVDDNLANVTSITEKVIRGELKTF.

ATP is bound at residue G136–D141.

This sequence belongs to the AdoMet synthase 2 family. The cofactor is Mg(2+).

The enzyme catalyses L-methionine + ATP + H2O = S-adenosyl-L-methionine + phosphate + diphosphate. The protein operates within amino-acid biosynthesis; S-adenosyl-L-methionine biosynthesis; S-adenosyl-L-methionine from L-methionine: step 1/1. Functionally, catalyzes the formation of S-adenosylmethionine from methionine and ATP. The protein is S-adenosylmethionine synthase of Methanoregula boonei (strain DSM 21154 / JCM 14090 / 6A8).